The primary structure comprises 428 residues: MLDPKFLRNELEVTAERLATRGFILDVERLGKLEEKRKSLQVSTEELQASRNAISKSIGQAKAKGEDVAPIMAKVGTLGAELDAKKVELAALLDELNAIAMSVPNLPDESAPIGADESENVEIRRWGTPKEFNFEVKDHVELGETLGGLDFKNAVKLTGSRFIIMKGQIARMHRALAQFMLDLHTTEHGYTEAYVPLLVNEDSLLGTGQLPKFGEDLFHTKPATEEGQGLSLIPTAEVPLTNIARDSIIDEDDLPVMMTAHTPCFRSEAGSYGRDTRGLIRQHQFDKVELVQLVKPEDSMQALEELTGHAETVLQKLGLPYRTVVLCTGDMGFGAAKTFDIEVWLPAQDTFREISSCSNMQDFQSRRMQARFKAKSAKKPSLLHTLNGSGLAVGRTLVAVLENYQNEDGSITVPEVLRGYMGGLEKIG.

235–237 (TAE) contributes to the L-serine binding site. 266-268 (RSE) contributes to the ATP binding site. Glutamate 289 serves as a coordination point for L-serine. Residue 353-356 (EISS) participates in ATP binding. Position 389 (serine 389) interacts with L-serine.

This sequence belongs to the class-II aminoacyl-tRNA synthetase family. Type-1 seryl-tRNA synthetase subfamily. Homodimer. The tRNA molecule binds across the dimer.

It localises to the cytoplasm. The catalysed reaction is tRNA(Ser) + L-serine + ATP = L-seryl-tRNA(Ser) + AMP + diphosphate + H(+). It carries out the reaction tRNA(Sec) + L-serine + ATP = L-seryl-tRNA(Sec) + AMP + diphosphate + H(+). Its pathway is aminoacyl-tRNA biosynthesis; selenocysteinyl-tRNA(Sec) biosynthesis; L-seryl-tRNA(Sec) from L-serine and tRNA(Sec): step 1/1. In terms of biological role, catalyzes the attachment of serine to tRNA(Ser). Is also able to aminoacylate tRNA(Sec) with serine, to form the misacylated tRNA L-seryl-tRNA(Sec), which will be further converted into selenocysteinyl-tRNA(Sec). This chain is Serine--tRNA ligase, found in Shewanella piezotolerans (strain WP3 / JCM 13877).